The following is a 200-amino-acid chain: Recombination protein RecR (200 aa).

A C4-type zinc finger spans residues 57 to 72 (CRQCRTLTEQELCPQC). The region spanning 80 to 175 (TQLCVVEGPM…VASRIAHGVP (96 aa)) is the Toprim domain.

Belongs to the RecR family.

In terms of biological role, may play a role in DNA repair. It seems to be involved in an RecBC-independent recombinational process of DNA repair. It may act with RecF and RecO. The polypeptide is Recombination protein RecR (Pseudomonas putida (strain W619)).